The chain runs to 187 residues: UPF0301 protein YqgE (187 aa).

The protein belongs to the UPF0301 (AlgH) family.

The chain is UPF0301 protein YqgE from Escherichia fergusonii (strain ATCC 35469 / DSM 13698 / CCUG 18766 / IAM 14443 / JCM 21226 / LMG 7866 / NBRC 102419 / NCTC 12128 / CDC 0568-73).